A 194-amino-acid polypeptide reads, in one-letter code: Peptidyl-tRNA hydrolase (194 aa).

TRNA is bound at residue Y17. H22 functions as the Proton acceptor in the catalytic mechanism. 3 residues coordinate tRNA: Y68, N70, and N116.

This sequence belongs to the PTH family. In terms of assembly, monomer.

It is found in the cytoplasm. It carries out the reaction an N-acyl-L-alpha-aminoacyl-tRNA + H2O = an N-acyl-L-amino acid + a tRNA + H(+). Its function is as follows. Hydrolyzes ribosome-free peptidyl-tRNAs (with 1 or more amino acids incorporated), which drop off the ribosome during protein synthesis, or as a result of ribosome stalling. Catalyzes the release of premature peptidyl moieties from peptidyl-tRNA molecules trapped in stalled 50S ribosomal subunits, and thus maintains levels of free tRNAs and 50S ribosomes. This Marinomonas sp. (strain MWYL1) protein is Peptidyl-tRNA hydrolase.